The sequence spans 265 residues: Glutamate racemase (265 aa).

Residues 12-13 (DS) and 44-45 (YG) each bind substrate. Cys-75 acts as the Proton donor/acceptor in catalysis. Substrate is bound at residue 76-77 (NT). The active-site Proton donor/acceptor is the Cys-183. Residue 184–185 (TH) participates in substrate binding.

This sequence belongs to the aspartate/glutamate racemases family.

It catalyses the reaction L-glutamate = D-glutamate. The protein operates within cell wall biogenesis; peptidoglycan biosynthesis. Functionally, provides the (R)-glutamate required for cell wall biosynthesis. The polypeptide is Glutamate racemase (Carboxydothermus hydrogenoformans (strain ATCC BAA-161 / DSM 6008 / Z-2901)).